The following is a 330-amino-acid chain: Protoheme IX farnesyltransferase (330 aa).

The next 9 helical transmembrane spans lie at 33–53, 54–74, 101–121, 126–146, 154–174, 180–200, 227–247, 250–270, and 308–328; these read VMTL…VDAD, PFLA…AGAL, VSNA…LMAL, LAAG…TMIL, IVIG…AATG, AVIL…ALAL, ILLY…TGLG, VYGA…WRIF, and VLFA…IPGV.

The protein belongs to the UbiA prenyltransferase family. Protoheme IX farnesyltransferase subfamily. In terms of assembly, interacts with CtaA.

The protein resides in the cell inner membrane. The enzyme catalyses heme b + (2E,6E)-farnesyl diphosphate + H2O = Fe(II)-heme o + diphosphate. The protein operates within porphyrin-containing compound metabolism; heme O biosynthesis; heme O from protoheme: step 1/1. Its function is as follows. Converts heme B (protoheme IX) to heme O by substitution of the vinyl group on carbon 2 of heme B porphyrin ring with a hydroxyethyl farnesyl side group. This Maricaulis maris (strain MCS10) (Caulobacter maris) protein is Protoheme IX farnesyltransferase.